A 317-amino-acid chain; its full sequence is Porphobilinogen deaminase (317 aa).

Residue C245 is modified to S-(dipyrrolylmethanemethyl)cysteine.

Belongs to the HMBS family. Monomer. It depends on dipyrromethane as a cofactor.

It carries out the reaction 4 porphobilinogen + H2O = hydroxymethylbilane + 4 NH4(+). Its pathway is porphyrin-containing compound metabolism; protoporphyrin-IX biosynthesis; coproporphyrinogen-III from 5-aminolevulinate: step 2/4. The protein operates within porphyrin-containing compound metabolism; chlorophyll biosynthesis. Tetrapolymerization of the monopyrrole PBG into the hydroxymethylbilane pre-uroporphyrinogen in several discrete steps. The polypeptide is Porphobilinogen deaminase (Parasynechococcus marenigrum (strain WH8102)).